A 360-amino-acid chain; its full sequence is MTPILRLLLLSSLLSCWKQSVVGANSWWSLALNPVQRPEMFIIGAQPLCSQLTGLSPGQRKLCQLYQDHMVHIGEGAKTGIKECQHQFKHRRWNCSTVDNNSVFGRVMQIGSREAAFTYAISSAGVVNAISRACREGELSTCGCSRTPRPKDLPRDWLWGGCGDNVEYGYRFAKEFVDAREREKNFPKGSEEQARSLMNLQNNEAGRRAVYKLADVACKCHGVSGSCSLKTCWLQLADFRKVGEYIKEKYDSAASMRLNKRNKLEQVNQRFNPPTGEDLVYLDPSPDYCLYNETTGSLGTHGRQCNKTSEGMDGCELMCCGRGYDQFKTVQVERCHCKFQWCCFVKCKKCTEIVDQFVCK.

The first 16 residues, methionine 1–cysteine 16, serve as a signal peptide directing secretion. A disulfide bridge links cysteine 84 with cysteine 95. Residues asparagine 94 and asparagine 100 are each glycosylated (N-linked (GlcNAc...) asparagine). Cystine bridges form between cysteine 134/cysteine 142, cysteine 144/cysteine 162, cysteine 218/cysteine 232, cysteine 220/cysteine 227, cysteine 289/cysteine 320, cysteine 305/cysteine 315, cysteine 319/cysteine 359, cysteine 335/cysteine 350, cysteine 337/cysteine 347, and cysteine 342/cysteine 343. The O-palmitoleoyl serine; by PORCN moiety is linked to residue serine 224. N-linked (GlcNAc...) asparagine glycosylation is found at asparagine 292 and asparagine 306.

Belongs to the Wnt family. Palmitoleoylation is required for efficient binding to frizzled receptors. Depalmitoleoylation leads to Wnt signaling pathway inhibition.

Its subcellular location is the secreted. It localises to the extracellular space. The protein localises to the extracellular matrix. Ligand for members of the frizzled family of seven transmembrane receptors. Probable developmental protein. May be a signaling molecule which affects the development of discrete regions of tissues. Is likely to signal over only few cell diameters. The protein is Protein Wnt-5b (wnt5b) of Xenopus laevis (African clawed frog).